Consider the following 496-residue polypeptide: Guanosine-5'-triphosphate,3'-diphosphate pyrophosphatase (496 aa).

The protein belongs to the GppA/Ppx family. GppA subfamily.

The catalysed reaction is guanosine 3'-diphosphate 5'-triphosphate + H2O = guanosine 3',5'-bis(diphosphate) + phosphate + H(+). It functions in the pathway purine metabolism; ppGpp biosynthesis; ppGpp from GTP: step 2/2. In terms of biological role, catalyzes the conversion of pppGpp to ppGpp. Guanosine pentaphosphate (pppGpp) is a cytoplasmic signaling molecule which together with ppGpp controls the 'stringent response', an adaptive process that allows bacteria to respond to amino acid starvation, resulting in the coordinated regulation of numerous cellular activities. This Aeromonas salmonicida (strain A449) protein is Guanosine-5'-triphosphate,3'-diphosphate pyrophosphatase.